The primary structure comprises 1295 residues: Phosphoribosylformylglycinamidine synthase (1295 aa).

The disordered stretch occupies residues 305–327; it reads WPGAATGSGGEIRDEGATGRGAK. ATP-binding positions include 307–318, 386–388, and alanine 678; these read GAATGSGGEIRD and TGY. Aspartate 679, glutamate 718, asparagine 722, and aspartate 884 together coordinate Mg(2+). Position 886 (serine 886) interacts with ATP. The 254-residue stretch at 1042–1295 folds into the Glutamine amidotransferase type-1 domain; sequence VAVLREQGVN…IFRNARKQLG (254 aa). The active-site Nucleophile is the cysteine 1135. Catalysis depends on residues histidine 1260 and glutamate 1262.

The protein in the N-terminal section; belongs to the FGAMS family. As to quaternary structure, monomer.

The protein resides in the cytoplasm. The enzyme catalyses N(2)-formyl-N(1)-(5-phospho-beta-D-ribosyl)glycinamide + L-glutamine + ATP + H2O = 2-formamido-N(1)-(5-O-phospho-beta-D-ribosyl)acetamidine + L-glutamate + ADP + phosphate + H(+). It participates in purine metabolism; IMP biosynthesis via de novo pathway; 5-amino-1-(5-phospho-D-ribosyl)imidazole from N(2)-formyl-N(1)-(5-phospho-D-ribosyl)glycinamide: step 1/2. Its function is as follows. Phosphoribosylformylglycinamidine synthase involved in the purines biosynthetic pathway. Catalyzes the ATP-dependent conversion of formylglycinamide ribonucleotide (FGAR) and glutamine to yield formylglycinamidine ribonucleotide (FGAM) and glutamate. The polypeptide is Phosphoribosylformylglycinamidine synthase (Salmonella typhi).